A 240-amino-acid chain; its full sequence is MIENWHRGFVLHRREYSETSLLVDFFTEEHGRVTLLAKGARRPRSPLKAVLQPFTPLLLRWSGKGDLKTLTKAEPASLTLPMQTLALYSGFYVNEVLARVLENQTAYPELFQHYLQCMTRLATQPKQIEPILRTFEFQMLKALGYGVNFSICAATGDPVSPSMTYQFRENQGFIASLLQNNYTFLGKDLLAFEQLNFSDKATLQAAKRFTRMALKPYLGSQPLKSRELFQSILPNKLKSS.

The protein belongs to the RecO family.

In terms of biological role, involved in DNA repair and RecF pathway recombination. This chain is DNA repair protein RecO, found in Actinobacillus pleuropneumoniae serotype 5b (strain L20).